A 224-amino-acid polypeptide reads, in one-letter code: Biosynthetic peptidoglycan transglycosylase (224 aa).

Residues 12-32 (ILVVLAILPVFLLLVYSLPFV) form a helical membrane-spanning segment.

This sequence belongs to the glycosyltransferase 51 family.

The protein localises to the cell inner membrane. The catalysed reaction is [GlcNAc-(1-&gt;4)-Mur2Ac(oyl-L-Ala-gamma-D-Glu-L-Lys-D-Ala-D-Ala)](n)-di-trans,octa-cis-undecaprenyl diphosphate + beta-D-GlcNAc-(1-&gt;4)-Mur2Ac(oyl-L-Ala-gamma-D-Glu-L-Lys-D-Ala-D-Ala)-di-trans,octa-cis-undecaprenyl diphosphate = [GlcNAc-(1-&gt;4)-Mur2Ac(oyl-L-Ala-gamma-D-Glu-L-Lys-D-Ala-D-Ala)](n+1)-di-trans,octa-cis-undecaprenyl diphosphate + di-trans,octa-cis-undecaprenyl diphosphate + H(+). It participates in cell wall biogenesis; peptidoglycan biosynthesis. Functionally, peptidoglycan polymerase that catalyzes glycan chain elongation from lipid-linked precursors. This Brucella suis biovar 1 (strain 1330) protein is Biosynthetic peptidoglycan transglycosylase.